Consider the following 1088-residue polypeptide: MTQEEEFMDEDVFINETLVSEDEESLILRDIEQRQALANRLSKWTRPPLSAGYVAQSRSVLFQQLEIDYVIAESHGELLPNSSGPVAIIRIFGVTKEGHSVCCNVHGFEPYFYICCPPGMGPDDISHFHQTLEGRMREANRNSNVGKFVRRIEMVQRRSIMYYQQSNSQPFLKIVVALPTMVASCRGILDRGIQLDGLGMKSFLTYESNVLFALRFMIDCNIVGGNWIGIPAGKYKKTAKSLSYCQLEFDCLYSELISHAPEGEYSKMAPFRILSFDIECAGRKGHFPEPTHDPVIQIANLVTLQGEDQPFIRNVMTLKSCSPIVGVDVMPFETEREVLLAWRDFIREVDPDIIIGYNICKFDLPYLIERALNLKIAEFPILGRIRNSRVRVKDTTFSSRQYGTRESKEVAVEGRVTFDLLQVMQRDYKLSSYSLNSVSSHFLSEQKEDVHHSIISDLQNGNAETRRRLAVYCLKDAYLPQRLLDKLMFIYNYVEMARVTGVPISFLLSRGQSIKVLSQLLRRARQKNLVIPNAKQAGSEQGTFEGATVLEARAGFYEKPIATLDFASLYPSIMMAYNLCYCTLVIPEDARKLNIPPESVNRTPSGETFVKSNLQKGILPEILEELLTARKRAKADLKEAKDPLEKAVLDGRQLALKISANSVYGFTGATIGQLPCLEISSSVTSYGRQMIEHTKKLVEDKFTTLNGYEHNAEVIYGDTDSVMVQFGVSAVEEAMNLGREAAEHISGTFTKPIKLEFEKVYYPYLLISKKRYAGLFWTKPDNFDKMDTKGIETVRRDNCLLVKNLVNDCLHKILIDRDIPGAVQYVKNAISDLLMNRMDLSLLVITKGLTKTGDDYEVKAAHVELAERMRKRDAATAPNVGDRVPYVIIKAAKGAKAYERSEDPIYVLENNIPIDPHYYLENQISKPILRIFEPILKNASKELLHGSHTRSISISTPSNSGILRFAKKQLPALVVKLYLARVITLSVHIAKEGRLSCTVKQYLKCLSWRCFLGGCGHSVRSAKVHFIRMFSAPVGIVQFSIDEKRHRKIWVKQSCNWTDGTSKFCQEFDLADLFEPMDTNTIWCLPQS.

It belongs to the DNA polymerase type-B family. In terms of assembly, heterodimer with subunits of 125 kDa and 50 kDa. The 125 kDa subunit contains the polymerase active site and most likely the active site for the 3'-5' exonuclease activity.

Its subcellular location is the nucleus. It catalyses the reaction DNA(n) + a 2'-deoxyribonucleoside 5'-triphosphate = DNA(n+1) + diphosphate. In terms of biological role, this polymerase possesses two enzymatic activities: DNA synthesis (polymerase) and an exonucleolytic activity that degrades single-stranded DNA in the 3'- to 5'-direction. The protein is DNA polymerase delta catalytic subunit (POLD1) of Glycine max (Soybean).